We begin with the raw amino-acid sequence, 1198 residues long: Sterol 3-beta-glucosyltransferase (1198 aa).

Residues 1–11 (MPITQIISASD) are compositionally biased toward polar residues. Disordered regions lie at residues 1-89 (MPIT…DNAD) and 124-162 (SQVD…PEVP). The segment covering 35-51 (RHHRLSRSLSKFKRWRG) has biased composition (basic residues). The segment covering 52 to 67 (RSNSSLSMGSSEQQEL) has biased composition (low complexity). Phosphoserine is present on Ser76. Basic and acidic residues predominate over residues 146-162 (VKSKKENLKTKSHPEVP). Residues 187–236 (AKLRQRFCLDEQEPFLNDFPAWLLKDVLVQGHIFITTKHFLFFAYLPKNP) form the GRAM 1 domain. The 99-residue stretch at 238–336 (SVKMSGNLNI…WVNALKKEQF (99 aa)) folds into the PH domain. The interval 427-465 (KSSFGKETPATAEQKNNGEDSKYLNVPTSAVPSSENGKK) is disordered. Residues 452–461 (VPTSAVPSSE) are compositionally biased toward polar residues. The GRAM 2 domain maps to 570–636 (ERFRYHFKFN…VDVETCYKEK (67 aa)). Position 693 is a phosphoserine (Ser693). Positions 749, 750, 752, 1025, 1053, 1054, 1056, 1069, 1072, 1073, 1074, 1093, and 1094 each coordinate UDP-alpha-D-glucose.

Belongs to the glycosyltransferase 28 family.

The protein localises to the cytoplasm. It localises to the membrane. It catalyses the reaction a sterol + UDP-alpha-D-glucose = a sterol 3-beta-D-glucoside + UDP + H(+). The catalysed reaction is ergosterol + UDP-alpha-D-glucose = ergosteryl 3-beta-D-glucoside + UDP + H(+). In terms of biological role, sterol glycosyltransferase responsible for the glycosylation of ergosterol to form ergosterol-glucoside. Also shows activity in vitro on other sterols such as cholesterol, beta-sitosterol, stigmasterol and tomatidine. In contrasts to what is observed in Pichia pastoris and Aspergillus oryzae, is not involved in cytoplasm to vacuole transport (Cvt), pexophagy or nonselective autophagy in Saccharomyces cerevisiae. In Saccharomyces cerevisiae (strain YJM789) (Baker's yeast), this protein is Sterol 3-beta-glucosyltransferase.